The following is a 727-amino-acid chain: ATP-dependent RNA helicase DBP7 (727 aa).

A disordered region spans residues 14-119 (PDTSSVAASK…TSHLAPTSTT (106 aa)). A compositionally biased stretch (polar residues) spans 15–28 (DTSSVAASKNQNVK). The span at 63-94 (DESKRKRDSEDKVQLDSNKRSKFTESKGENGG) shows a compositional bias: basic and acidic residues. Residues 99–119 (YVSSLFTNNQPTSHLAPTSTT) show a composition bias toward polar residues. The short motif at 135–164 (TNFSGLGLNEKLSIHLTDHLRFMHPTKIQQ) is the Q motif element. Residues 168–363 (PSLISTENDL…SIVLKDPEMI (196 aa)) form the Helicase ATP-binding domain. Residue 181-188 (AQTGSGKT) participates in ATP binding. The DEAD box motif lies at 295–298 (DEGD). Residues 406-613 (TLDALLLKIS…NIKSKDNKLG (208 aa)) form the Helicase C-terminal domain. The tract at residues 683–727 (KKLGKSVGNNSNYSESKKGKKEDPRKKMLRMAKMAVKSASSEFNY) is disordered. The span at 697–708 (ESKKGKKEDPRK) shows a compositional bias: basic and acidic residues.

Belongs to the DEAD box helicase family. DDX31/DBP7 subfamily.

It is found in the nucleus. The protein localises to the nucleolus. It catalyses the reaction ATP + H2O = ADP + phosphate + H(+). Functionally, ATP-binding RNA helicase involved in the biogenesis of 60S ribosomal subunits and is required for the normal formation of 25S and 5.8S rRNAs. The sequence is that of ATP-dependent RNA helicase DBP7 (DBP7) from Candida albicans (strain SC5314 / ATCC MYA-2876) (Yeast).